Here is a 341-residue protein sequence, read N- to C-terminus: Anthranilate phosphoribosyltransferase (341 aa).

5-phospho-alpha-D-ribose 1-diphosphate-binding positions include Gly79, 82-83 (GD), Thr87, 89-92 (NIST), 107-115 (KHGNRAVSS), and Ser119. Residue Gly79 coordinates anthranilate. Ser91 contributes to the Mg(2+) binding site. Anthranilate is bound at residue Asn110. Arg165 lines the anthranilate pocket. Residues Asp224 and Glu225 each contribute to the Mg(2+) site.

The protein belongs to the anthranilate phosphoribosyltransferase family. As to quaternary structure, homodimer. Mg(2+) serves as cofactor.

The catalysed reaction is N-(5-phospho-beta-D-ribosyl)anthranilate + diphosphate = 5-phospho-alpha-D-ribose 1-diphosphate + anthranilate. It participates in amino-acid biosynthesis; L-tryptophan biosynthesis; L-tryptophan from chorismate: step 2/5. In terms of biological role, catalyzes the transfer of the phosphoribosyl group of 5-phosphorylribose-1-pyrophosphate (PRPP) to anthranilate to yield N-(5'-phosphoribosyl)-anthranilate (PRA). In Bacillus cereus (strain ATCC 14579 / DSM 31 / CCUG 7414 / JCM 2152 / NBRC 15305 / NCIMB 9373 / NCTC 2599 / NRRL B-3711), this protein is Anthranilate phosphoribosyltransferase.